Here is a 529-residue protein sequence, read N- to C-terminus: T-complex protein 1 subunit beta (529 aa).

Belongs to the TCP-1 chaperonin family. Heterooligomeric complex of about 850 to 900 kDa that forms two stacked rings, 12 to 16 nm in diameter.

Its subcellular location is the cytoplasm. In terms of biological role, molecular chaperone; assists the folding of proteins upon ATP hydrolysis. Known to play a role, in vitro, in the folding of actin and tubulin. This chain is T-complex protein 1 subunit beta (cct-2), found in Caenorhabditis elegans.